The sequence spans 404 residues: Deoxyguanosinetriphosphate triphosphohydrolase-like protein (404 aa).

The region spanning 69–217 (RLTHSLEVAQ…AGIADDIAYD (149 aa)) is the HD domain.

It belongs to the dGTPase family. Type 2 subfamily.

This Rhodopseudomonas palustris (strain BisB18) protein is Deoxyguanosinetriphosphate triphosphohydrolase-like protein.